The following is a 313-amino-acid chain: Formimidoylglutamase (313 aa).

Residues His-130, Asp-155, His-157, Asp-159, Asp-241, and Asp-243 each contribute to the Mn(2+) site.

This sequence belongs to the arginase family. Mn(2+) serves as cofactor.

The enzyme catalyses N-formimidoyl-L-glutamate + H2O = formamide + L-glutamate. The protein operates within amino-acid degradation; L-histidine degradation into L-glutamate; L-glutamate from N-formimidoyl-L-glutamate (hydrolase route): step 1/1. Functionally, catalyzes the conversion of N-formimidoyl-L-glutamate to L-glutamate and formamide. The polypeptide is Formimidoylglutamase (Salmonella enteritidis PT4 (strain P125109)).